A 353-amino-acid polypeptide reads, in one-letter code: Alanine racemase (353 aa).

The active-site Proton acceptor; specific for D-alanine is the K33. K33 is subject to N6-(pyridoxal phosphate)lysine. R129 contributes to the substrate binding site. Catalysis depends on Y250, which acts as the Proton acceptor; specific for L-alanine. M298 serves as a coordination point for substrate.

This sequence belongs to the alanine racemase family. Pyridoxal 5'-phosphate serves as cofactor.

It catalyses the reaction L-alanine = D-alanine. It participates in amino-acid biosynthesis; D-alanine biosynthesis; D-alanine from L-alanine: step 1/1. In terms of biological role, catalyzes the interconversion of L-alanine and D-alanine. May also act on other amino acids. In Aromatoleum aromaticum (strain DSM 19018 / LMG 30748 / EbN1) (Azoarcus sp. (strain EbN1)), this protein is Alanine racemase (alr).